We begin with the raw amino-acid sequence, 494 residues long: Aspartyl/glutamyl-tRNA(Asn/Gln) amidotransferase subunit B (494 aa).

It belongs to the GatB/GatE family. GatB subfamily. In terms of assembly, heterotrimer of A, B and C subunits.

It catalyses the reaction L-glutamyl-tRNA(Gln) + L-glutamine + ATP + H2O = L-glutaminyl-tRNA(Gln) + L-glutamate + ADP + phosphate + H(+). The enzyme catalyses L-aspartyl-tRNA(Asn) + L-glutamine + ATP + H2O = L-asparaginyl-tRNA(Asn) + L-glutamate + ADP + phosphate + 2 H(+). In terms of biological role, allows the formation of correctly charged Asn-tRNA(Asn) or Gln-tRNA(Gln) through the transamidation of misacylated Asp-tRNA(Asn) or Glu-tRNA(Gln) in organisms which lack either or both of asparaginyl-tRNA or glutaminyl-tRNA synthetases. The reaction takes place in the presence of glutamine and ATP through an activated phospho-Asp-tRNA(Asn) or phospho-Glu-tRNA(Gln). In Rhodopseudomonas palustris (strain ATCC BAA-98 / CGA009), this protein is Aspartyl/glutamyl-tRNA(Asn/Gln) amidotransferase subunit B.